The chain runs to 129 residues: Large ribosomal subunit protein bL21 (129 aa).

A disordered region spans residues 100 to 129 (DGAKPSKKAAEKKAPKAAPKKAAAKAESAE).

It belongs to the bacterial ribosomal protein bL21 family. As to quaternary structure, part of the 50S ribosomal subunit. Contacts protein L20.

Its function is as follows. This protein binds to 23S rRNA in the presence of protein L20. This chain is Large ribosomal subunit protein bL21, found in Brucella anthropi (strain ATCC 49188 / DSM 6882 / CCUG 24695 / JCM 21032 / LMG 3331 / NBRC 15819 / NCTC 12168 / Alc 37) (Ochrobactrum anthropi).